A 269-amino-acid polypeptide reads, in one-letter code: 5'-nucleotidase SurE (269 aa).

Asp11, Asp12, Ser43, and Asn101 together coordinate a divalent metal cation.

Belongs to the SurE nucleotidase family. A divalent metal cation serves as cofactor.

Its subcellular location is the cytoplasm. The catalysed reaction is a ribonucleoside 5'-phosphate + H2O = a ribonucleoside + phosphate. Nucleotidase that shows phosphatase activity on nucleoside 5'-monophosphates. In Prochlorococcus marinus (strain MIT 9303), this protein is 5'-nucleotidase SurE.